The following is a 374-amino-acid chain: Putative glutamate--cysteine ligase 2 (374 aa).

It belongs to the glutamate--cysteine ligase type 2 family. YbdK subfamily.

It carries out the reaction L-cysteine + L-glutamate + ATP = gamma-L-glutamyl-L-cysteine + ADP + phosphate + H(+). In terms of biological role, ATP-dependent carboxylate-amine ligase which exhibits weak glutamate--cysteine ligase activity. This is Putative glutamate--cysteine ligase 2 from Paracidovorax citrulli (strain AAC00-1) (Acidovorax citrulli).